Reading from the N-terminus, the 348-residue chain is MSDLGAVISLLLWGRQLFALYSGNDVTDISDDRFPKPPEIANGYVEHLFRYQCKNYYRLRTEGDGVYTLNDKKQWINKAVGDKLPECEAVCGKPKNPANPVQRILGGHLDAKGSFPWQAKMVSHHNLTTGATLINEQWLLTTAKNLFLNHSENATAKDIAPTLTLYVGKKQLVEIEKVVLHPNYHQVDIGLIKLKQKVLVNERVMPICLPSKNYAEVGRVGYVSGWGQSDNFKLTDHLKYVMLPVADQYDCITHYEGSTCPKWKAPKSPVGVQPILNEHTFCVGMSKYQEDTCYGDAGSAFAVHDLEEDTWYAAGILSFDKSCAVAEYGVYVKVTSIQHWVQKTIAEN.

Residues 1–18 (MSDLGAVISLLLWGRQLF) constitute a signal peptide (not cleaved). The 54-residue stretch at 34–87 (FPKPPEIANGYVEHLFRYQCKNYYRLRTEGDGVYTLNDKKQWINKAVGDKLPEC) folds into the Sushi domain. Positions 104 to 346 (ILGGHLDAKG…IQHWVQKTIA (243 aa)) constitute a Peptidase S1 domain. 2 disulfides stabilise this stretch: Cys251–Cys282 and Cys293–Cys323.

Belongs to the peptidase S1 family. As to expression, in adult liver the amount of HPR mRNA is at the lower limit of detection, therefore the extent of its expression is at most less than 1000-fold that of the HP1F gene. No HPR mRNA can be detected in fetal liver. Expressed in Hep-G2 and leukemia MOLT-4 cell lines.

The protein resides in the secreted. Its function is as follows. Primate-specific plasma protein associated with apolipoprotein L-I (apoL-I)-containing high-density lipoprotein (HDL). This HDL particle, termed trypanosome lytic factor-1 (TLF-1), mediates human innate immune protection against many species of African trypanosomes. Binds hemoglobin with high affinity and may contribute to the clearance of cell-free hemoglobin to allow hepatic recycling of heme iron. The polypeptide is Haptoglobin-related protein (HPR) (Homo sapiens (Human)).